Reading from the N-terminus, the 654-residue chain is Tumor necrosis factor alpha-induced protein 2 (654 aa).

Disordered stretches follow at residues 1–38 (MSEA…KKSK) and 50–78 (GKKK…PPPT). Residues 28 to 38 (KKKKEKKKKSK) are compositionally biased toward basic residues.

It belongs to the SEC6 family.

Its function is as follows. May play a role as a mediator of inflammation and angiogenesis. In Homo sapiens (Human), this protein is Tumor necrosis factor alpha-induced protein 2 (TNFAIP2).